The following is a 154-amino-acid chain: 6,7-dimethyl-8-ribityllumazine synthase (154 aa).

5-amino-6-(D-ribitylamino)uracil contacts are provided by residues Phe-22, 56 to 58 (AFE), and 80 to 82 (TVI). 85–86 (AT) serves as a coordination point for (2S)-2-hydroxy-3-oxobutyl phosphate. His-88 acts as the Proton donor in catalysis. Phe-113 contacts 5-amino-6-(D-ribitylamino)uracil. Arg-127 is a binding site for (2S)-2-hydroxy-3-oxobutyl phosphate.

Belongs to the DMRL synthase family. Forms an icosahedral capsid composed of 60 subunits, arranged as a dodecamer of pentamers.

It carries out the reaction (2S)-2-hydroxy-3-oxobutyl phosphate + 5-amino-6-(D-ribitylamino)uracil = 6,7-dimethyl-8-(1-D-ribityl)lumazine + phosphate + 2 H2O + H(+). Its pathway is cofactor biosynthesis; riboflavin biosynthesis; riboflavin from 2-hydroxy-3-oxobutyl phosphate and 5-amino-6-(D-ribitylamino)uracil: step 1/2. Functionally, catalyzes the formation of 6,7-dimethyl-8-ribityllumazine by condensation of 5-amino-6-(D-ribitylamino)uracil with 3,4-dihydroxy-2-butanone 4-phosphate. This is the penultimate step in the biosynthesis of riboflavin. This is 6,7-dimethyl-8-ribityllumazine synthase from Bacillus pumilus (strain SAFR-032).